A 307-amino-acid polypeptide reads, in one-letter code: Putative lipid kinase SERP0390 (307 aa).

The DAGKc domain occupies 3-139; sequence QPYNHGVLFY…YDVLKVNDLY (137 aa). ATP is bound by residues serine 44, 74–80, and threonine 101; that span reads GDGTLNE. Positions 220, 223, and 225 each coordinate Mg(2+). The active-site Proton acceptor is glutamate 281.

Belongs to the diacylglycerol/lipid kinase family. It depends on Mg(2+) as a cofactor.

Functionally, may catalyze the ATP-dependent phosphorylation of lipids other than diacylglycerol (DAG). This Staphylococcus epidermidis (strain ATCC 35984 / DSM 28319 / BCRC 17069 / CCUG 31568 / BM 3577 / RP62A) protein is Putative lipid kinase SERP0390.